Here is a 358-residue protein sequence, read N- to C-terminus: Photosystem II protein D1 2 (358 aa).

3 helical membrane passes run 28 to 45, 117 to 132, and 141 to 155; these read YVGWFGVLMIPCLLAATT, HFLIGISAYMGRQWEL, and WICVAYSAPLSAAFA. His-117 serves as a coordination point for chlorophyll a. Tyr-125 is a binding site for pheophytin a. Asp-169 and Glu-188 together coordinate [CaMn4O5] cluster. The chain crosses the membrane as a helical span at residues 196–217; sequence FHMLGVAGVFGGSLFSAMHGSL. His-197 is a binding site for chlorophyll a. A quinone is bound by residues His-214 and 263–264; that span reads SF. A Fe cation-binding site is contributed by His-214. His-271 provides a ligand contact to Fe cation. A helical membrane pass occupies residues 273–287; sequence FLAAWPVVGIWFTSM. [CaMn4O5] cluster is bound by residues His-331, Glu-332, Asp-341, and Ala-343. A propeptide spanning residues 344–358 is cleaved from the precursor; it reads ATESTPVALQAPTIG.

The protein belongs to the reaction center PufL/M/PsbA/D family. As to quaternary structure, PSII is composed of 1 copy each of membrane proteins PsbA, PsbB, PsbC, PsbD, PsbE, PsbF, PsbH, PsbI, PsbJ, PsbK, PsbL, PsbM, PsbT, PsbX, PsbY, PsbZ, Psb30/Ycf12, peripheral proteins PsbO, CyanoQ (PsbQ), PsbU, PsbV and a large number of cofactors. It forms dimeric complexes. The cofactor is The D1/D2 heterodimer binds P680, chlorophylls that are the primary electron donor of PSII, and subsequent electron acceptors. It shares a non-heme iron and each subunit binds pheophytin, quinone, additional chlorophylls, carotenoids and lipids. D1 provides most of the ligands for the Mn4-Ca-O5 cluster of the oxygen-evolving complex (OEC). There is also a Cl(-1) ion associated with D1 and D2, which is required for oxygen evolution. The PSII complex binds additional chlorophylls, carotenoids and specific lipids.. Tyr-160 forms a radical intermediate that is referred to as redox-active TyrZ, YZ or Y-Z. In terms of processing, C-terminally processed by CtpA; processing is essential to allow assembly of the oxygen-evolving complex and thus photosynthetic growth.

The protein resides in the cellular thylakoid membrane. It catalyses the reaction 2 a plastoquinone + 4 hnu + 2 H2O = 2 a plastoquinol + O2. Photosystem II (PSII) is a light-driven water:plastoquinone oxidoreductase that uses light energy to abstract electrons from H(2)O, generating O(2) and a proton gradient subsequently used for ATP formation. It consists of a core antenna complex that captures photons, and an electron transfer chain that converts photonic excitation into a charge separation. The D1/D2 (PsbA/PsbD) reaction center heterodimer binds P680, the primary electron donor of PSII as well as several subsequent electron acceptors. The protein is Photosystem II protein D1 2 of Synechococcus sp. (strain WH7803).